Here is a 181-residue protein sequence, read N- to C-terminus: UPF0316 protein Bcer98_2136 (181 aa).

Helical transmembrane passes span 6–26 (LIFV…ILLV), 32–52 (SAAG…GIVF), and 58–78 (WMNI…GGYI).

The protein belongs to the UPF0316 family.

The protein localises to the cell membrane. The polypeptide is UPF0316 protein Bcer98_2136 (Bacillus cytotoxicus (strain DSM 22905 / CIP 110041 / 391-98 / NVH 391-98)).